Consider the following 95-residue polypeptide: Small ubiquitin-related modifier 2 (95 aa).

K11 is covalently cross-linked (Glycyl lysine isopeptide (Lys-Gly) (interchain with G-Cter in SUMO)). The 80-residue stretch at 16–95 (DHINLKVAGQ…VFQQQTGGSF (80 aa)) folds into the Ubiquitin-like domain. G93 participates in a covalent cross-link: Glycyl lysine isopeptide (Gly-Lys) (interchain with K-? in acceptor proteins). Positions 94-95 (SF) are excised as a propeptide.

It belongs to the ubiquitin family. SUMO subfamily. In terms of assembly, interacts with sae2 and ube2i. Covalently attached to a number of proteins, including top2. Post-translationally, polymeric chains can be formed through Lys-11 cross-linking. In terms of processing, cleavage of precursor form by a sentrin-specific protease is necessary for function.

The protein localises to the nucleus. In terms of biological role, ubiquitin-like protein that can be covalently attached to proteins as a monomer or as a lysine-linked polymer. Covalent attachment via an isopeptide bond to its substrates requires prior activation by the E1 complex sae1-sae2 and linkage to the E2 enzyme ube2i, and can be promoted by an E3 ligase such as pias1-4. This post-translational modification on lysine residues of proteins plays a crucial role in a number of cellular processes such as nuclear transport, DNA replication and repair, mitosis and signal transduction. Polymeric sumo2 chains are also susceptible to polyubiquitination which functions as a signal for proteasomal degradation of modified proteins. The chain is Small ubiquitin-related modifier 2 (sumo2) from Xenopus tropicalis (Western clawed frog).